The sequence spans 86 residues: Toxin To8 (86 aa).

Residues 1-20 (MTRFVLFISCFFLIGMVVEC) form the signal peptide. Positions 21 to 83 (KEGYLLGSRG…LWESDTNECG (63 aa)) constitute an LCN-type CS-alpha/beta domain. Cystine bridges form between C31/C82, C35/C57, C43/C63, and C47/C65. C82 is modified (cysteine amide).

Belongs to the long (4 C-C) scorpion toxin superfamily. Sodium channel inhibitor family. Beta subfamily. As to expression, expressed by the venom gland.

It localises to the secreted. Beta toxins bind voltage-independently at site-4 of sodium channels (Nav) and shift the voltage of activation toward more negative potentials thereby affecting sodium channel activation and promoting spontaneous and repetitive firing. This Tityus obscurus (Amazonian scorpion) protein is Toxin To8.